The chain runs to 147 residues: Hemoglobin subunit beta-2 (147 aa).

The Globin domain occupies 3–147 (HWTAEEKATI…LVAALSHGYF (145 aa)). Residues H64 and H93 each contribute to the heme b site.

It belongs to the globin family. Heterotetramer of two alpha chains and two beta chains. In terms of tissue distribution, red blood cells.

Its function is as follows. This is a larval (tadpole) beta-globin. This Xenopus tropicalis (Western clawed frog) protein is Hemoglobin subunit beta-2 (hbb2).